A 350-amino-acid chain; its full sequence is MDPGRVVFDSGVARRACPGGAQMLLFGGGGSANSGGFFRGVPAAVLGMDESRSSSSAAGAGAKRPFFTTHEELLEEEYYDEQAPEKKRRLTAEQVQMLERSFEEENKLEPERKTELARRLGMAPRQVAVWFQNRRARWKTKQLEHDFDRLKAAYDALAADHHALLSDNDRLRAQVISLTEKLQDKETSPSSATITTAAQEVDQPDEHTEAASTTGFATVDGALAAPPPGHQQPPHKDDLVSSGGTNDDGDGGGAAVVVFDVTEGANDRLSCESAYFADAAEAYERDCAGHYALSSEEEDGGAVSDEGCSFDLPDAAAAAAAMFGAAGVVHHDAADDEEAQLGSWTAWFWS.

Residues A83–Q142 constitute a DNA-binding region (homeobox). Residues K141–K185 are leucine-zipper. A disordered region spans residues E180–A254. The segment covering S188–A198 has biased composition (low complexity).

Belongs to the HD-ZIP homeobox family. Class I subfamily. Homodimer. May form a heterodimer with HOX4. In terms of tissue distribution, expressed in seedlings, roots, leaves, nodes, internodes, flowers and embryo.

It localises to the nucleus. Its function is as follows. Probable transcription activator that binds to the DNA sequence 5'-CAAT[AT]ATTG-3'. In Oryza sativa subsp. indica (Rice), this protein is Homeobox-leucine zipper protein HOX5 (HOX5).